The following is a 370-amino-acid chain: Cobalt-precorrin-5B C(1)-methyltransferase (370 aa).

Belongs to the CbiD family.

It catalyses the reaction Co-precorrin-5B + S-adenosyl-L-methionine = Co-precorrin-6A + S-adenosyl-L-homocysteine. Its pathway is cofactor biosynthesis; adenosylcobalamin biosynthesis; cob(II)yrinate a,c-diamide from sirohydrochlorin (anaerobic route): step 6/10. In terms of biological role, catalyzes the methylation of C-1 in cobalt-precorrin-5B to form cobalt-precorrin-6A. The protein is Cobalt-precorrin-5B C(1)-methyltransferase of Pseudomonas syringae pv. tomato (strain ATCC BAA-871 / DC3000).